The sequence spans 336 residues: UDP-glucose 4-epimerase (336 aa).

Residues 11–12 (YI), 31–36 (DNLINS), 58–59 (DI), 80–84 (FAGLK), Asn99, Ser124, Tyr149, Lys153, and Phe178 each bind NAD(+). Substrate contacts are provided by Ser124 and Tyr149. Tyr149 acts as the Proton acceptor in catalysis. Substrate is bound by residues Asn179, 199–200 (NL), 216–218 (LVY), Arg231, and 290–293 (RPGD).

Belongs to the NAD(P)-dependent epimerase/dehydratase family. As to quaternary structure, homodimer. NAD(+) serves as cofactor.

It catalyses the reaction UDP-alpha-D-glucose = UDP-alpha-D-galactose. The protein operates within carbohydrate metabolism; galactose metabolism. In terms of biological role, involved in the metabolism of galactose. Catalyzes the conversion of UDP-galactose (UDP-Gal) to UDP-glucose (UDP-Glc) through a mechanism involving the transient reduction of NAD. This Yersinia enterocolitica protein is UDP-glucose 4-epimerase (galE).